Here is a 67-residue protein sequence, read N- to C-terminus: Large ribosomal subunit protein bL35 (67 aa).

Over residues methionine 1–valine 16 the composition is skewed to basic residues. The tract at residues methionine 1 to arginine 24 is disordered.

It belongs to the bacterial ribosomal protein bL35 family.

The protein is Large ribosomal subunit protein bL35 of Verminephrobacter eiseniae (strain EF01-2).